An 823-amino-acid polypeptide reads, in one-letter code: MDNTYNPQEVEEQAQQYWHKKQSFNVTEDLNKEKFYCLSMFPYPSGTLHMGHVRNYTLGDVIARYQRALGKNVLQPIGWDAFGLPAENAAIKNKIPPAEWTRKNIAAMKEQFLRLGNAYDWKREITTCDPEYYRWEQWFFIRLFEKGLVYKKNAVVNWDPVDQTVLANEQVVDGRGWRSGALVERKEISQWFIKITSYADELLSSLDSLDEWPAQVKQMQRNWIGKSIGTEIYFNVNNYPKRLKIYTTRPDTLMGATYLAVATDHPLAKEAASNNKKVQEFLDSCQGIKIAEAELATMEKRGIDTGMTAIHPITGKELPIWVANFVLMQYGSGAVMAVPAHDQRDWEFAQKYQLPVKQVIKPIDIEHDFNQSAYTEEGILINSNQFDNLLSSKAIQVITNFLEENDAGKATINYRLRDWGVSRQRYWGTPIPMIICEQCGIVPVPDEELPVVLPENVDFTGTGSPLTQCKEFVNVTCPKCGQDATRETDTFDTFVESSWYYARFACKGQENAMLDDRAKYWTPVDQYIGGIEHAVMHLLYARFFHKLMRDEGLVNSDEPFKALLTQGMVLKDGHKMSKSLGNVVDPNHLINTYGADTARLFVMFASPPEQSLEWSDSGVEGAHRFLKRVWAFSHQHRDMLIDINDSILSGNGHVDWKEAESRLKKSRHIVHQILAQATHDYDRNQFNTVVSGCMKLFNEISDYSIETENDKFFIHSSISILLRLLAPITPHICHCLWQQLGFDKAIIDAPWPKVDKSALKTDEVDYVVQVNGKLRAQFTASTDATEEELIAAAKEHAHNFVVNHTIKKAIIVPHRQLINLVIG.

Positions 42 to 52 match the 'HIGH' region motif; it reads PYPSGTLHMGH. The 'KMSKS' region motif lies at 575-579; sequence KMSKS. K578 provides a ligand contact to ATP.

The protein belongs to the class-I aminoacyl-tRNA synthetase family.

Its subcellular location is the cytoplasm. The catalysed reaction is tRNA(Leu) + L-leucine + ATP = L-leucyl-tRNA(Leu) + AMP + diphosphate. This chain is Leucine--tRNA ligase, found in Legionella pneumophila subsp. pneumophila (strain Philadelphia 1 / ATCC 33152 / DSM 7513).